We begin with the raw amino-acid sequence, 486 residues long: CUGBP Elav-like family member 4 (486 aa).

A sufficient for RNA-binding and MSE-dependent splicing activity region spans residues 1 to 298 (MYIKMATLAN…AAFAAAQMQQ (298 aa)). Polar residues predominate over residues 18 to 28 (LSTNGLGSSPG). Disordered stretches follow at residues 18–39 (LSTN…LSHS) and 121–149 (LPGM…QPPS). Residues 54-135 (IKLFIGQIPR…RPIQVKPADS (82 aa)) enclose the RRM 1 domain. Polar residues predominate over residues 138–149 (RGGSSCLRQPPS). One can recognise an RRM 2 domain in the interval 152–232 (RKLFVGMLNK…SSLVVKFADT (81 aa)). Residues 239-258 (RRMQQMAGQMGMFNPMAIPF) form a necessary for TNNT2 exon 5 inclusion region. The RRM 3 domain maps to 404-479 (PQPPPMIPQQ…KRLKVQLKRP (76 aa)).

The protein belongs to the CELF/BRUNOL family. In terms of tissue distribution, ubiquitous. Strongly expressed in the cerebellum, hippocampus, amygdala, temporal and frontal cortex and frontal lobes.

It localises to the nucleus. Its subcellular location is the cytoplasm. RNA-binding protein implicated in the regulation of pre-mRNA alternative splicing. Mediates exon inclusion and/or exclusion in pre-mRNA that are subject to tissue-specific and developmentally regulated alternative splicing. Specifically activates exon 5 inclusion of cardiac isoforms of TNNT2 during heart remodeling at the juvenile to adult transition. Promotes exclusion of both the smooth muscle (SM) and non-muscle (NM) exons in actinin pre-mRNAs. Activates the splicing of MAPT/Tau exon 10. Binds to muscle-specific splicing enhancer (MSE) intronic sites flanking the alternative exon 5 of TNNT2 pre-mRNA. The chain is CUGBP Elav-like family member 4 (CELF4) from Homo sapiens (Human).